Consider the following 476-residue polypeptide: Tubulointerstitial nephritis antigen (476 aa).

Residue asparagine 38 is glycosylated (N-linked (GlcNAc...) asparagine). The SMB domain maps to 59-107 (NFGCCEDRDDGCVTEFYAANALCYCDKFCDRENSDCCPDYKSFCREEKE). 6 disulfide bridges follow: cysteine 63–cysteine 70, cysteine 70–cysteine 102, cysteine 81–cysteine 83, cysteine 81–cysteine 95, cysteine 87–cysteine 94, and cysteine 95–cysteine 102. Residues asparagine 175, asparagine 314, asparagine 360, and asparagine 455 are each glycosylated (N-linked (GlcNAc...) asparagine).

Belongs to the peptidase C1 family. It has been suggested that the active SMB domain may be permitted considerable disulfide bond heterogeneity or variability, thus 2 alternate disulfide patterns based on 3D structures are described with 1 disulfide bond conserved in both. Expressed in the kidney cortex, small intestine and cornea.

It localises to the secreted. The protein resides in the extracellular space. Its subcellular location is the extracellular matrix. The protein localises to the basement membrane. In terms of biological role, mediates adhesion of proximal tubule epithelial cells via integrins alpha3-beta1 and alphaV-beta3. This is a non catalytic peptidase C1 family protein. The polypeptide is Tubulointerstitial nephritis antigen (TINAG) (Homo sapiens (Human)).